The primary structure comprises 95 residues: RING finger protein Z (95 aa).

The span at 1-17 (MGNCNRTQKPSSSSNNL) shows a compositional bias: polar residues. Positions 1 to 25 (MGNCNRTQKPSSSSNNLEKPPQAAE) are disordered. G2 is lipidated: N-myristoyl glycine; by host. An RING-type; atypical zinc finger spans residues 40–76 (CKCCWFADKNLITCSDHYLCLRCHQIMLRNSELCNIC). Positions 90 to 93 (ASAP) match the ASAP motif motif.

This sequence belongs to the arenaviridae Z protein family. In terms of assembly, interacts with protein NP; this interaction probably directs the encapsidated genome to budding sites. Interacts (via RING domain) with polymerase L; this interaction inhibits viral transcription and replication, Z partially blocks the product exit tunnel for the releasing nascent RNA product. Interacts with the glycoprotein complex; this interaction plays a role in virion budding. Interacts with host eIF4E; this interaction results in eIF4E reduced affinity for its substrate, the 5'-m7 G cap structure. Interacts (via late-budding domain) with host TSG101; this interaction is essential for budding and release of viral particles. Interacts with host RPLP0; this interaction may serve to load ribosome-like particles inside the virion. Interacts with host PML; this interaction induces PML bodies redistribution in the cytoplasm upon viral infection. Post-translationally, myristoylation is required for the role of RING finger protein Z in assembly and budding.

It is found in the virion. Its subcellular location is the host cytoplasm. The protein localises to the host perinuclear region. It localises to the host cell membrane. In terms of biological role, plays a crucial role in virion assembly and budding. Expressed late in the virus life cycle, it acts as an inhibitor of viral transcription and RNA synthesis by interacting with the viral polymerase L. Presumably recruits the NP encapsidated genome to cellular membranes at budding sites via direct interaction with NP. Plays critical roles in the final steps of viral release by interacting with host TSG101, a member of the vacuolar protein-sorting pathway and using other cellular host proteins involved in vesicle formation pathway. The budding of the virus progeny occurs after association of protein Z with the viral glycoprotein complex SSP-GP1-GP2 at the cell periphery, step that requires myristoylation of protein Z. Also selectively represses protein production by associating with host eIF4E. In cell-based minigenome assay, has an inhibitory effect on the ribonucleoprotein machinery (vRNP), which is responsible for the replication and transcription of the viral genome. This chain is RING finger protein Z, found in Tacaribe virus (strain Franze-Fernandez) (TCRV).